A 705-amino-acid polypeptide reads, in one-letter code: Elongation factor G 2 (705 aa).

The 281-residue stretch at 8–288 (ERYRNIGISA…AVIDYLPSPA (281 aa)) folds into the tr-type G domain. GTP-binding positions include 17-24 (AHIDAGKT), 86-90 (DTPGH), and 140-143 (NKMD).

Belongs to the TRAFAC class translation factor GTPase superfamily. Classic translation factor GTPase family. EF-G/EF-2 subfamily.

The protein localises to the cytoplasm. Its function is as follows. Catalyzes the GTP-dependent ribosomal translocation step during translation elongation. During this step, the ribosome changes from the pre-translocational (PRE) to the post-translocational (POST) state as the newly formed A-site-bound peptidyl-tRNA and P-site-bound deacylated tRNA move to the P and E sites, respectively. Catalyzes the coordinated movement of the two tRNA molecules, the mRNA and conformational changes in the ribosome. This is Elongation factor G 2 from Bordetella parapertussis (strain 12822 / ATCC BAA-587 / NCTC 13253).